The sequence spans 214 residues: Oocyte zinc finger protein XlCOF10 (214 aa).

7 consecutive C2H2-type zinc fingers follow at residues F1–H23, F29–H51, F57–H79, F85–H107, F113–H135, F141–H163, and F169–H191.

It belongs to the krueppel C2H2-type zinc-finger protein family.

It localises to the nucleus. In terms of biological role, may be involved in transcriptional regulation. This chain is Oocyte zinc finger protein XlCOF10, found in Xenopus laevis (African clawed frog).